The primary structure comprises 122 residues: Large ribosomal subunit protein uL14 (122 aa).

This sequence belongs to the universal ribosomal protein uL14 family. Part of the 50S ribosomal subunit. Forms a cluster with proteins L3 and L19. In the 70S ribosome, L14 and L19 interact and together make contacts with the 16S rRNA in bridges B5 and B8. Interacts with ribosomal silencing factor RsfS, which may inhibit ribosomal subunit association.

Functionally, binds to 23S rRNA. Forms part of two intersubunit bridges in the 70S ribosome. This Treponema pallidum (strain Nichols) protein is Large ribosomal subunit protein uL14.